The primary structure comprises 454 residues: N-acetyl-S-(2-succino)cysteine lyase (454 aa).

106-107 is a binding site for fumarate; sequence TT. His154 serves as the catalytic Proton donor/acceptor. Arg233 is a binding site for fumarate. Ser277 functions as the Proton donor/acceptor in the catalytic mechanism. Fumarate-binding positions include Thr278 and 283-285; that span reads KRN.

It belongs to the lyase 1 family.

The enzyme catalyses N-acetyl-S-(2-succino)-L-cysteine = N-acetyl-L-cysteine + fumarate. It functions in the pathway amino-acid biosynthesis; L-cysteine biosynthesis. Its function is as follows. Catalyzes the cleavage of N-acetyl-S-(2-succino)cysteine into fumarate and N-acetylcysteine. Is involved in a S-(2-succino)cysteine (2SC) degradation pathway that allows the bacterium to recover cysteine from 2SC and to detoxify 2SC that may be a toxic metabolite. Can also perform the reverse reaction in vitro, and has minor activity against 2SC and other small molecule thiols. The polypeptide is N-acetyl-S-(2-succino)cysteine lyase (Dickeya dadantii (strain 3937) (Erwinia chrysanthemi (strain 3937))).